The primary structure comprises 944 residues: Protein translocase subunit SecA (944 aa).

ATP contacts are provided by residues Gln77, 95-99, and Asp484; that span reads GEGKT. A disordered region spans residues 920–944; the sequence is EQEKQTKKKKKKKPHDDETTKVKIG. Over residues 933–944 the composition is skewed to basic and acidic residues; sequence PHDDETTKVKIG.

The protein belongs to the SecA family. In terms of assembly, monomer and homodimer. Part of the essential Sec protein translocation apparatus which comprises SecA, SecYEG and auxiliary proteins SecDF. Other proteins may also be involved.

It is found in the cell membrane. The protein localises to the cytoplasm. It carries out the reaction ATP + H2O + cellular proteinSide 1 = ADP + phosphate + cellular proteinSide 2.. Its function is as follows. Part of the Sec protein translocase complex. Interacts with the SecYEG preprotein conducting channel. Has a central role in coupling the hydrolysis of ATP to the transfer of proteins into and across the cell membrane, serving as an ATP-driven molecular motor driving the stepwise translocation of polypeptide chains across the membrane. The sequence is that of Protein translocase subunit SecA from Mycoplasma capricolum subsp. capricolum (strain California kid / ATCC 27343 / NCTC 10154).